A 258-amino-acid polypeptide reads, in one-letter code: Snake venom serine protease 1 (258 aa).

Positions 1–18 are cleaved as a signal peptide; sequence MVLIRVLANLLILQLSYA. The propeptide occupies 19–24; sequence QKSSEL. A Peptidase S1 domain is found at 25 to 249; sequence VVGGDECNIN…YNDWIKSIIA (225 aa). 6 disulfide bridges follow: Cys31–Cys163, Cys50–Cys66, Cys98–Cys256, Cys142–Cys210, Cys174–Cys189, and Cys200–Cys225. N-linked (GlcNAc...) asparagine glycosylation occurs at Asn44. Active-site charge relay system residues include His65 and Asp110. The Charge relay system role is filled by Ser204.

This sequence belongs to the peptidase S1 family. Snake venom subfamily. Monomer. As to expression, expressed by the venom gland.

Its subcellular location is the secreted. Functionally, snake venom serine protease that may act in the hemostasis system of the prey. The polypeptide is Snake venom serine protease 1 (TLG1) (Craspedocephalus gramineus (Bamboo pit viper)).